Here is a 64-residue protein sequence, read N- to C-terminus: Large ribosomal subunit protein bL35 (64 aa).

The interval 27–47 (MNGSHNLEKKNRKRSRRLHQA) is disordered. Residues 36–45 (KNRKRSRRLH) are compositionally biased toward basic residues.

This sequence belongs to the bacterial ribosomal protein bL35 family.

The protein is Large ribosomal subunit protein bL35 of Chlorobium phaeobacteroides (strain DSM 266 / SMG 266 / 2430).